We begin with the raw amino-acid sequence, 141 residues long: Hemoglobin subunit alpha-A (141 aa).

The 141-residue stretch at 1-141 (VLSAADKANV…VGAVLTAKYR (141 aa)) folds into the Globin domain. Residue H58 participates in O2 binding. A heme b-binding site is contributed by H87.

Belongs to the globin family. Heterotetramer of two alpha chains and two beta chains. Red blood cells.

Its function is as follows. Involved in oxygen transport from the lung to the various peripheral tissues. The sequence is that of Hemoglobin subunit alpha-A (HBAA) from Chloephaga melanoptera (Andean goose).